Reading from the N-terminus, the 1213-residue chain is uncharacterized protein (1213 aa).

The PH domain maps to 289 to 390 (ATKRQGWLLR…WGSVINNARE (102 aa)). Positions 776 to 945 (LDDIVFDRVY…EVNFLEKATR (170 aa)) constitute a VASt domain. The next 2 membrane-spanning stretches (helical) occupy residues 996 to 1016 (LFLQGLAIDLLKLPWAVFHIF) and 1025 to 1045 (FLVIIFACSVILNLSLMFCFG).

The protein resides in the cytoplasm. Its subcellular location is the nucleus membrane. It is found in the cytoskeleton. It localises to the microtubule organizing center. The protein localises to the spindle pole body. This is an uncharacterized protein from Schizosaccharomyces pombe (strain 972 / ATCC 24843) (Fission yeast).